The primary structure comprises 116 residues: Ribonuclease P protein component (116 aa).

This sequence belongs to the RnpA family. Consists of a catalytic RNA component (M1 or rnpB) and a protein subunit.

It carries out the reaction Endonucleolytic cleavage of RNA, removing 5'-extranucleotides from tRNA precursor.. Its function is as follows. RNaseP catalyzes the removal of the 5'-leader sequence from pre-tRNA to produce the mature 5'-terminus. It can also cleave other RNA substrates such as 4.5S RNA. The protein component plays an auxiliary but essential role in vivo by binding to the 5'-leader sequence and broadening the substrate specificity of the ribozyme. This Pseudanabaena sp. (strain PCC 6903) protein is Ribonuclease P protein component.